The sequence spans 945 residues: Kinesin-like protein CIN8 (945 aa).

Residues 22–409 (NITVAVRCRG…LEYAAKAKNI (388 aa)) form the Kinesin motor domain. 114 to 121 (GMTSTGKT) contacts ATP. Residues 190–243 (IFDSSSMNHSSRASSQSNSPREPEVAHNGFSRRRQRPPPVKANRMSATKQQLSE) form a disordered region. The span at 193-208 (SSSMNHSSRASSQSNS) shows a compositional bias: low complexity. Positions 234 to 243 (MSATKQQLSE) are enriched in polar residues. Coiled-coil stretches lie at residues 450 to 562 (MSHE…DIKE) and 634 to 675 (LKEF…YLDQ).

Belongs to the TRAFAC class myosin-kinesin ATPase superfamily. Kinesin family. BimC subfamily.

It is found in the cytoplasm. It localises to the cytoskeleton. The protein resides in the spindle. Its function is as follows. Elongates the mitotic spindle by interacting with spindle microtubules to generate an outward force pushing spindle poles apart. Following spindle assembly, CIN8 and KIP1 apparently act to oppose a force, possibly generated by KAR3, that draws separated poles back together. The protein is Kinesin-like protein CIN8 (CIN8) of Eremothecium gossypii (strain ATCC 10895 / CBS 109.51 / FGSC 9923 / NRRL Y-1056) (Yeast).